Reading from the N-terminus, the 327-residue chain is Biotin synthase (327 aa).

One can recognise a Radical SAM core domain in the interval 52–279; it reads NAIQRSTLLS…TSWVRLSAGR (228 aa). [4Fe-4S] cluster is bound by residues C67, C71, and C74. Residues C111, C142, C202, and R274 each coordinate [2Fe-2S] cluster.

Belongs to the radical SAM superfamily. Biotin synthase family. Homodimer. [4Fe-4S] cluster serves as cofactor. It depends on [2Fe-2S] cluster as a cofactor.

The catalysed reaction is (4R,5S)-dethiobiotin + (sulfur carrier)-SH + 2 reduced [2Fe-2S]-[ferredoxin] + 2 S-adenosyl-L-methionine = (sulfur carrier)-H + biotin + 2 5'-deoxyadenosine + 2 L-methionine + 2 oxidized [2Fe-2S]-[ferredoxin]. Its pathway is cofactor biosynthesis; biotin biosynthesis; biotin from 7,8-diaminononanoate: step 2/2. Its function is as follows. Catalyzes the conversion of dethiobiotin (DTB) to biotin by the insertion of a sulfur atom into dethiobiotin via a radical-based mechanism. The polypeptide is Biotin synthase (Dechloromonas aromatica (strain RCB)).